We begin with the raw amino-acid sequence, 317 residues long: CXXC-type zinc finger protein 5 (317 aa).

Residues 1–49 show a composition bias toward low complexity; it reads MSSLSSGPQDTGGSSSSSSNGSSGSGPKAGVADKSAAVAAAAPASVADD. The tract at residues 1–96 is disordered; that stretch reads MSSLSSGPQD…GSGGGSMMGG (96 aa). Residues 83–94 show a composition bias toward gly residues; it reads GGSGGSGGGSMM. The CXXC-type zinc-finger motif lies at 251-292; sequence GKKKRKRCGMCAPCRRRINCEQCSSCRNRKTGHQICKFRKCE. The Nuclear localization signal signature appears at 252-257; that stretch reads KKKRKR. Zn(2+) is bound by residues Cys258, Cys261, Cys264, Cys270, Cys273, Cys276, Cys286, and Cys291.

In terms of assembly, interacts with DVL1. Interacts with RBPJ.

Its subcellular location is the nucleus. The protein localises to the cytoplasm. May indirectly participate in activation of the NF-kappa-B and MAPK pathways. Acts as a mediator of BMP4-mediated modulation of canonical Wnt signaling activity in neural stem cells. Required for DNA damage-induced ATM phosphorylation, p53 activation and cell cycle arrest. Involved in myelopoiesis. Binds to the oxygen responsive element of COX4I2 and represses its transcription under hypoxia conditions (4% oxygen), as well as normoxia conditions (20% oxygen). May repress COX4I2 transactivation induced by CHCHD2 and RBPJ. Binds preferentially to DNA containing cytidine-phosphate-guanosine (CpG) dinucleotides over CpH (H=A, T, and C), hemimethylated-CpG and hemimethylated-hydroxymethyl-CpG. In Bos taurus (Bovine), this protein is CXXC-type zinc finger protein 5 (CXXC5).